The following is a 193-amino-acid chain: Acyl carrier protein phosphodiesterase (193 aa).

It belongs to the AcpH family.

It catalyses the reaction holo-[ACP] + H2O = apo-[ACP] + (R)-4'-phosphopantetheine + H(+). In terms of biological role, converts holo-ACP to apo-ACP by hydrolytic cleavage of the phosphopantetheine prosthetic group from ACP. This chain is Acyl carrier protein phosphodiesterase, found in Escherichia coli O157:H7.